Here is a 70-residue protein sequence, read N- to C-terminus: Conotoxin AbVIB (70 aa).

Residues 1 to 17 form the signal peptide; sequence VIIIAVLFLTACQLTTA. Residues 18 to 41 constitute a propeptide that is removed on maturation; sequence ETSSRGKQKHRALRSTDKNSKLTR. The interval 20–41 is disordered; sequence SSRGKQKHRALRSTDKNSKLTR. 3 disulfide bridges follow: Cys43–Cys57, Cys50–Cys61, and Cys56–Cys68.

The protein belongs to the conotoxin O1 superfamily. Expressed by the venom duct.

It is found in the secreted. This Conus abbreviatus (Abbreviated cone) protein is Conotoxin AbVIB.